The following is a 72-amino-acid chain: uncharacterized protein (72 aa).

This sequence belongs to the asfivirus I73R family.

The protein localises to the virion. This is an uncharacterized protein from African swine fever virus (isolate Warthog/Namibia/Wart80/1980) (ASFV).